Here is a 59-residue protein sequence, read N- to C-terminus: MPAFFSLPAERRLQAWPQSEAPLSVSSCFQNRPPEPASFQNLRPEPASLQNLRTEPTSF.

A disordered region spans residues Ser27 to Phe59. The segment covering Ser48 to Phe59 has biased composition (polar residues).

This is an uncharacterized protein from Homo sapiens (Human).